A 226-amino-acid polypeptide reads, in one-letter code: Chalcone--flavanone isomerase (226 aa).

Substrate-binding residues include Thr-47, Asn-112, and Ser-189.

The protein belongs to the chalcone isomerase family.

It carries out the reaction a chalcone = a flavanone.. It participates in secondary metabolite biosynthesis; flavonoid biosynthesis. Catalyzes the intramolecular cyclization of bicyclic chalcones into tricyclic (S)-flavanones. Responsible for the isomerization of 4,2',4',6'-tetrahydroxychalcone (also termed chalcone) into naringenin. The protein is Chalcone--flavanone isomerase (CHI) of Allium cepa (Onion).